A 485-amino-acid polypeptide reads, in one-letter code: Adenosylhomocysteinase 1 (485 aa).

Residues threonine 64, aspartate 139, and glutamate 205 each coordinate substrate. 206 to 208 (TTT) lines the NAD(+) pocket. 2 residues coordinate substrate: lysine 235 and aspartate 239. NAD(+) contacts are provided by residues 271 to 276 (GDVGKG), glutamate 292, 348 to 350 (IGH), asparagine 397, histidine 404, lysine 479, 479 to 483 (KPPHY), and tyrosine 483.

It belongs to the adenosylhomocysteinase family. As to quaternary structure, homotetramer. It depends on NAD(+) as a cofactor.

The enzyme catalyses S-adenosyl-L-homocysteine + H2O = L-homocysteine + adenosine. The protein operates within amino-acid biosynthesis; L-homocysteine biosynthesis; L-homocysteine from S-adenosyl-L-homocysteine: step 1/1. In terms of biological role, essential protein during embryogenesis. Adenosylhomocysteine is a competitive inhibitor of S-adenosyl-L-methionine-dependent methyl transferase reactions; therefore adenosylhomocysteinase may play a key role in the control of methylations via regulation of the intracellular concentration of adenosylhomocysteine. Required for DNA methylation-dependent gene silencing. This is Adenosylhomocysteinase 1 from Arabidopsis thaliana (Mouse-ear cress).